A 600-amino-acid chain; its full sequence is Torsin-1A-interacting protein 1 (600 aa).

Over residues 1-14 (MAGEGQRAEPEREG) the composition is skewed to basic and acidic residues. Disordered stretches follow at residues 1-261 (MAGE…YKES) and 310-346 (MRSI…QPKS). Residues 1-354 (MAGEGQRAEP…KSVSSVKTKR (354 aa)) lie on the Nuclear side of the membrane. A Phosphoserine modification is found at Ser-61. Basic and acidic residues-rich tracts occupy residues 71-81 (FEPRAAKEKAR), 91-102 (FRPDSAKEEVRE), and 116-125 (RLHEAEEMQT). Residues Ser-137, Ser-145, Ser-156, Ser-158, Ser-159, and Ser-189 each carry the phosphoserine modification. The span at 192 to 203 (PLISLRRPPLRS) shows a compositional bias: low complexity. Acidic residues predominate over residues 219-232 (EEGETEENDQDSFD). Phosphothreonine is present on Thr-223. A phosphoserine mark is found at Ser-230, Ser-233, and Ser-244. The span at 247–261 (SGDQTTRSSSQYKES) shows a compositional bias: polar residues. Ser-322 is subject to Phosphoserine. A Glycyl lysine isopeptide (Lys-Gly) (interchain with G-Cter in SUMO2) cross-link involves residue Lys-325. The segment covering 325–346 (KSELGNQSPSTSNQQMTGQPKS) has biased composition (polar residues). The residue at position 332 (Ser-332) is a Phosphoserine. The helical transmembrane segment at 355–371 (YWPFAVIAALLIGGFLY) threads the bilayer. Residues 372–600 (TRPPEAETTA…ENDLKKGICL (229 aa)) are Perinuclear space-facing. Residues 373-600 (RPPEAETTAV…ENDLKKGICL (228 aa)) form an interaction with TOR1A region. A coiled-coil region spans residues 376-452 (EAETTAVQEF…SEQIADAYSS (77 aa)). N-linked (GlcNAc...) asparagine glycosylation is present at Asn-416.

It belongs to the TOR1AIP family. As to quaternary structure, interacts with ATP1B4. Interacts with TOR1A (ATP-bound). Interacts with TOR1B, TOR2A and TOR3A. Interacts with VIM.

It localises to the nucleus inner membrane. Its function is as follows. Required for nuclear membrane integrity. Induces TOR1A and TOR1B ATPase activity and is required for their location on the nuclear membrane. Binds to A- and B-type lamins. Possible role in membrane attachment and assembly of the nuclear lamina. The protein is Torsin-1A-interacting protein 1 (TOR1AIP1) of Bos taurus (Bovine).